Reading from the N-terminus, the 348-residue chain is Aspartate carbamoyltransferase catalytic subunit (348 aa).

R59 and T60 together coordinate carbamoyl phosphate. Residue K87 participates in L-aspartate binding. Carbamoyl phosphate is bound by residues R109, H142, and Q145. Residues R182 and R253 each contribute to the L-aspartate site. Residues G294 and P295 each coordinate carbamoyl phosphate.

This sequence belongs to the aspartate/ornithine carbamoyltransferase superfamily. ATCase family. As to quaternary structure, heterododecamer (2C3:3R2) of six catalytic PyrB chains organized as two trimers (C3), and six regulatory PyrI chains organized as three dimers (R2).

It carries out the reaction carbamoyl phosphate + L-aspartate = N-carbamoyl-L-aspartate + phosphate + H(+). The protein operates within pyrimidine metabolism; UMP biosynthesis via de novo pathway; (S)-dihydroorotate from bicarbonate: step 2/3. Functionally, catalyzes the condensation of carbamoyl phosphate and aspartate to form carbamoyl aspartate and inorganic phosphate, the committed step in the de novo pyrimidine nucleotide biosynthesis pathway. The protein is Aspartate carbamoyltransferase catalytic subunit of Prochlorococcus marinus (strain MIT 9313).